The following is a 155-amino-acid chain: MLHKKYRPNVAAIIMSPNYPNACEVFIAERIDIEGAWQFPQGGIDEGETPLEALYRELLEEIGTNEIEILAQYPRWIAYDFPSNMEHKFYAFDGQKQRYFLVRLKHANNIDLNKHTPEFRAYRFIHLKDLLKKIVPFKRQVYRQVIAYFKREGYL.

Residues 5-147 (KYRPNVAAII…KRQVYRQVIA (143 aa)) form the Nudix hydrolase domain. The short motif at 42–63 (GGIDEGETPLEALYRELLEEIG) is the Nudix box element.

The protein belongs to the Nudix hydrolase family. RppH subfamily. The cofactor is a divalent metal cation.

Its function is as follows. Accelerates the degradation of transcripts by removing pyrophosphate from the 5'-end of triphosphorylated RNA, leading to a more labile monophosphorylated state that can stimulate subsequent ribonuclease cleavage. This is RNA pyrophosphohydrolase from Helicobacter pylori (strain P12).